Reading from the N-terminus, the 145-residue chain is Probable low molecular weight protein-tyrosine-phosphatase EpsP (145 aa).

C9 functions as the Nucleophile in the catalytic mechanism. R15 is a catalytic residue. D114 (proton donor) is an active-site residue.

Belongs to the low molecular weight phosphotyrosine protein phosphatase family.

It carries out the reaction O-phospho-L-tyrosyl-[protein] + H2O = L-tyrosyl-[protein] + phosphate. It participates in glycan metabolism; exopolysaccharide biosynthesis. Its function is as follows. May be involved in assembly or function of the EPS I polymerization/export complex and/or the EpsB ATPase. Alternatively it may function in the removal of the terminal phosphate from C55-isoprenyl pyrophosphate in order to recycle the C55-isoprenyl phosphate lipid carrier used in the synthesis of polysaccharide repeat units. This is Probable low molecular weight protein-tyrosine-phosphatase EpsP (epsP) from Ralstonia solanacearum (Pseudomonas solanacearum).